The sequence spans 720 residues: WSC domain-containing protein ARB_07870 (720 aa).

The first 24 residues, 1–24, serve as a signal peptide directing secretion; sequence MLINLSAVWAAFALSGVLAPPTWP. N-linked (GlcNAc...) asparagine glycans are attached at residues asparagine 4, asparagine 108, asparagine 181, asparagine 264, asparagine 296, asparagine 318, asparagine 474, asparagine 549, asparagine 581, asparagine 629, asparagine 640, asparagine 663, and asparagine 701. WSC domains follow at residues 524–615 and 627–718; these read DYTF…YKDD and GYNY…YTKL.

The protein belongs to the WSCD family.

It localises to the secreted. The polypeptide is WSC domain-containing protein ARB_07870 (Arthroderma benhamiae (strain ATCC MYA-4681 / CBS 112371) (Trichophyton mentagrophytes)).